A 286-amino-acid polypeptide reads, in one-letter code: ATP synthase gamma chain (286 aa).

This sequence belongs to the ATPase gamma chain family. F-type ATPases have 2 components, CF(1) - the catalytic core - and CF(0) - the membrane proton channel. CF(1) has five subunits: alpha(3), beta(3), gamma(1), delta(1), epsilon(1). CF(0) has three main subunits: a, b and c.

It localises to the cell inner membrane. Produces ATP from ADP in the presence of a proton gradient across the membrane. The gamma chain is believed to be important in regulating ATPase activity and the flow of protons through the CF(0) complex. This is ATP synthase gamma chain from Flavobacterium psychrophilum (strain ATCC 49511 / DSM 21280 / CIP 103535 / JIP02/86).